Reading from the N-terminus, the 107-residue chain is UPF0060 membrane protein Sala_0701 (107 aa).

A run of 4 helical transmembrane segments spans residues 4-24 (FAYI…WAWL), 30-50 (VWWV…LTLV), 60-80 (AAYG…VEGA), and 87-107 (LIGA…PRGG).

This sequence belongs to the UPF0060 family.

It localises to the cell inner membrane. This is UPF0060 membrane protein Sala_0701 from Sphingopyxis alaskensis (strain DSM 13593 / LMG 18877 / RB2256) (Sphingomonas alaskensis).